The following is a 96-amino-acid chain: Guanyl-specific ribonuclease Sa (96 aa).

A disulfide bridge connects residues C7 and C96. E54 serves as the catalytic Proton acceptor. The active-site Proton donor is the H85.

It belongs to the ribonuclease N1/T1 family.

The protein localises to the secreted. The enzyme catalyses [RNA] containing guanosine + H2O = an [RNA fragment]-3'-guanosine-3'-phosphate + a 5'-hydroxy-ribonucleotide-3'-[RNA fragment].. This is Guanyl-specific ribonuclease Sa (rnaSA) from Kitasatospora aureofaciens (Streptomyces aureofaciens).